The sequence spans 350 residues: sn-1 oleoyl-lipid 12-desaturase (350 aa).

Helical transmembrane passes span 41 to 61 and 64 to 84; these read AWTQ…SLAI and WFLL…FFVI. Residues 86–90 carry the Histidine box-1 motif; it reads HDCGH. Residues 98-118 traverse the membrane as a helical segment; the sequence is WVNDLVGHIFMMPLIYPFHSW. Positions 122–126 match the Histidine box-2 motif; it reads HNHHH. 2 helical membrane passes run 196 to 216 and 219 to 239; these read VAVV…TTGI and FVKF…TFTI. The Histidine box-3 signature appears at 287–291; sequence HHLST.

Belongs to the fatty acid desaturase type 2 family. Fe(2+) is required as a cofactor.

The protein localises to the membrane. It catalyses the reaction a 1-[(9Z)-octadecenoyl]-2-acyl-glycerolipid + 2 reduced [2Fe-2S]-[ferredoxin] + O2 + 2 H(+) = a 1-[(9Z,12Z)-octadecdienoyl]-2-acyl-glycerolipid + 2 oxidized [2Fe-2S]-[ferredoxin] + 2 H2O. The protein operates within lipid metabolism; polyunsaturated fatty acid biosynthesis. In terms of biological role, desaturase involved in fatty acid biosynthesis. Introduces a double bond at carbon 12 of oleoyl groups (18:1) attached to the sn-1 position of the glycerol moiety of membrane glycerolipids. This is sn-1 oleoyl-lipid 12-desaturase from Anabaena variabilis.